A 432-amino-acid chain; its full sequence is Keratin, type I cytoskeletal 17 (432 aa).

The segment at 1–24 (MTTTIRQFTSSSSIKGSSGLGGGS) is disordered. Positions 1 to 83 (MTTTIRQFTS…GGVDGLLAGG (83 aa)) are head. 2 positions are modified to phosphoserine: Ser12 and Ser13. A Glycyl lysine isopeptide (Lys-Gly) (interchain with G-Cter in SUMO1); alternate cross-link involves residue Lys15. A Glycyl lysine isopeptide (Lys-Gly) (interchain with G-Cter in SUMO2); alternate cross-link involves residue Lys15. 3 positions are modified to phosphoserine: Ser25, Ser32, and Ser39. Residue Ser44 is modified to Phosphoserine; by RPS6KA1. Positions 84–120 (EKATMQNLNDRLASYLDKVRALEEANTELEVKIRDWY) are coil 1A. Positions 84–395 (EKATMQNLND…RLLEGEDAHL (312 aa)) constitute an IF rod domain. Thr110 is subject to Phosphothreonine. Positions 121–138 (QRQAPGPARDYSQYYRTI) are linker 1. The interval 139 to 230 (EELQNKILTA…NHEEEMNALR (92 aa)) is coil 1B. The linker 12 stretch occupies residues 231-250 (GQVGGEINVEMDAAPGVDLS). The segment at 251–392 (RILNEMRDQY…TYRRLLEGED (142 aa)) is coil 2. Lys278 is covalently cross-linked (Glycyl lysine isopeptide (Lys-Gly) (interchain with G-Cter in SUMO2)). The residue at position 279 (Thr279) is a Phosphothreonine. A Phosphoserine modification is found at Ser323. Residues 393-432 (AHLTQYKKEPVTTRQVRTIVEEVQDGKVISSREQVHQTTR) are tail. Residues Lys399, Lys400, and Lys419 each participate in a glycyl lysine isopeptide (Lys-Gly) (interchain with G-Cter in SUMO1); alternate cross-link. Glycyl lysine isopeptide (Lys-Gly) (interchain with G-Cter in SUMO2); alternate cross-links involve residues Lys399, Lys400, and Lys419.

It belongs to the intermediate filament family. Heterodimer of a type I and a type II keratin. KRT17 associates with KRT6 isomers (KRT6A or KRT6B). Interacts with TRADD and SFN. In terms of processing, phosphorylation at Ser-44 occurs in a growth- and stress-dependent fashion in skin keratinocytes, it has no effect on filament organization.

It is found in the cytoplasm. In terms of biological role, type I keratin involved in the formation and maintenance of various skin appendages, specifically in determining shape and orientation of hair. Required for the correct growth of hair follicles, in particular for the persistence of the anagen (growth) state. Modulates the function of TNF-alpha in the specific context of hair cycling. Regulates protein synthesis and epithelial cell growth through binding to the adapter protein SFN and by stimulating Akt/mTOR pathway. Involved in tissue repair. May be a marker of basal cell differentiation in complex epithelia and therefore indicative of a certain type of epithelial 'stem cells'. Acts as a promoter of epithelial proliferation by acting a regulator of immune response in skin: promotes Th1/Th17-dominated immune environment contributing to the development of basaloid skin tumors. May act as an autoantigen in the immunopathogenesis of psoriasis, with certain peptide regions being a major target for autoreactive T-cells and hence causing their proliferation. This is Keratin, type I cytoskeletal 17 from Pan troglodytes (Chimpanzee).